We begin with the raw amino-acid sequence, 464 residues long: Uronate isomerase (464 aa).

This sequence belongs to the metallo-dependent hydrolases superfamily. Uronate isomerase family.

It catalyses the reaction D-glucuronate = D-fructuronate. It carries out the reaction aldehydo-D-galacturonate = keto-D-tagaturonate. It functions in the pathway carbohydrate metabolism; pentose and glucuronate interconversion. The polypeptide is Uronate isomerase (Caldicellulosiruptor saccharolyticus (strain ATCC 43494 / DSM 8903 / Tp8T 6331)).